The primary structure comprises 215 residues: Cytochrome b6 (215 aa).

A helical membrane pass occupies residues 32–52 (IFYCLGGITLTCFLIQFATGF). Cysteine 35 contacts heme c. 2 residues coordinate heme b: histidine 86 and histidine 100. A run of 3 helical transmembrane segments spans residues 90–110 (ASMMVLMMILHVFRVYLTGGF), 116–136 (LTWVTGVVLAVITVSFGVTGY), and 186–206 (LHTFVLPWSIAVFMLMHFLMI). Histidine 187 and histidine 202 together coordinate heme b.

This sequence belongs to the cytochrome b family. PetB subfamily. The 4 large subunits of the cytochrome b6-f complex are cytochrome b6, subunit IV (17 kDa polypeptide, PetD), cytochrome f and the Rieske protein, while the 4 small subunits are PetG, PetL, PetM and PetN. The complex functions as a dimer. Requires heme b as cofactor. It depends on heme c as a cofactor.

It is found in the cellular thylakoid membrane. Its function is as follows. Component of the cytochrome b6-f complex, which mediates electron transfer between photosystem II (PSII) and photosystem I (PSI), cyclic electron flow around PSI, and state transitions. This is Cytochrome b6 from Synechococcus elongatus.